Reading from the N-terminus, the 210-residue chain is Interleukin-6 (210 aa).

Residues 1–25 form the signal peptide; the sequence is MNSLSTSAFSPVAFSLGLLLVMATA. Cys72 and Cys78 are disulfide-bonded. Phosphoserine is present on Ser81. Cys101 and Cys111 form a disulfide bridge.

It belongs to the IL-6 superfamily. As to quaternary structure, component of a hexamer of two molecules each of IL6, IL6R and IL6ST; first binds to IL6R to associate with the signaling subunit IL6ST. Interacts with IL6R (via the N-terminal ectodomain); this interaction may be affected by IL6R-binding with SORL1, hence decreasing IL6 cis signaling. Interacts with SORL1 (via the N-terminal ectodomain); this interaction leads to IL6 internalization and lysosomal degradation. May form a trimeric complex with the soluble SORL1 ectodomain and soluble IL6R receptor; this interaction might stabilize circulating IL6, hence promoting IL6 trans signaling.

It localises to the secreted. Functionally, cytokine with a wide variety of biological functions in immunity, tissue regeneration, and metabolism. Binds to IL6R, then the complex associates to the signaling subunit IL6ST/gp130 to trigger the intracellular IL6-signaling pathway. The interaction with the membrane-bound IL6R and IL6ST stimulates 'classic signaling', whereas the binding of IL6 and soluble IL6R to IL6ST stimulates 'trans-signaling'. Alternatively, 'cluster signaling' occurs when membrane-bound IL6:IL6R complexes on transmitter cells activate IL6ST receptors on neighboring receiver cells. Its function is as follows. IL6 is a potent inducer of the acute phase response. Rapid production of IL6 contributes to host defense during infection and tissue injury, but excessive IL6 synthesis is involved in disease pathology. In the innate immune response, is synthesized by myeloid cells, such as macrophages and dendritic cells, upon recognition of pathogens through toll-like receptors (TLRs) at the site of infection or tissue injury. In the adaptive immune response, is required for the differentiation of B cells into immunoglobulin-secreting cells. Plays a major role in the differentiation of CD4(+) T cell subsets. Essential factor for the development of T follicular helper (Tfh) cells that are required for the induction of germinal-center formation. Required to drive naive CD4(+) T cells to the Th17 lineage. Also required for proliferation of myeloma cells and the survival of plasmablast cells. In terms of biological role, acts as an essential factor in bone homeostasis and on vessels directly or indirectly by induction of VEGF, resulting in increased angiogenesis activity and vascular permeability. Induces, through 'trans-signaling' and synergistically with IL1B and TNF, the production of VEGF. Involved in metabolic controls, is discharged into the bloodstream after muscle contraction increasing lipolysis and improving insulin resistance. 'Trans-signaling' in central nervous system also regulates energy and glucose homeostasis. Mediates, through GLP-1, crosstalk between insulin-sensitive tissues, intestinal L cells and pancreatic islets to adapt to changes in insulin demand. Also acts as a myokine. Plays a protective role during liver injury, being required for maintenance of tissue regeneration. Also has a pivotal role in iron metabolism by regulating HAMP/hepcidin expression upon inflammation or bacterial infection. Through activation of IL6ST-YAP-NOTCH pathway, induces inflammation-induced epithelial regeneration. The chain is Interleukin-6 (IL6) from Mustela putorius furo (European domestic ferret).